The primary structure comprises 152 residues: MSEKYIVTWDMLQIHARKLASRLMPSEQWKGIIAVSRGGLVPGALLARELGIRHVDTVCISSYDHDNQRELKVLKRAEGDGEGFIVIDDLVDTGGTAVAIREMYPKAHFITIFAKPAGRPLVDDYVVDIPQNTWIEQPWDMGVVFVPPISGR.

5-phospho-alpha-D-ribose 1-diphosphate-binding positions include 37–38, Arg-69, and 88–96; these read RG and DDLVDTGGT. Arg-69 contacts GMP. A Mg(2+)-binding site is contributed by Asp-89. Positions 92 and 135 each coordinate guanine. Positions 92 and 135 each coordinate xanthine. Residues 92–96 and 134–135 contribute to the GMP site; these read DTGGT and WI.

It belongs to the purine/pyrimidine phosphoribosyltransferase family. XGPT subfamily. In terms of assembly, homotetramer. Mg(2+) serves as cofactor.

The protein localises to the cell inner membrane. The catalysed reaction is GMP + diphosphate = guanine + 5-phospho-alpha-D-ribose 1-diphosphate. It catalyses the reaction XMP + diphosphate = xanthine + 5-phospho-alpha-D-ribose 1-diphosphate. It carries out the reaction IMP + diphosphate = hypoxanthine + 5-phospho-alpha-D-ribose 1-diphosphate. It participates in purine metabolism; GMP biosynthesis via salvage pathway; GMP from guanine: step 1/1. Its pathway is purine metabolism; XMP biosynthesis via salvage pathway; XMP from xanthine: step 1/1. Its function is as follows. Purine salvage pathway enzyme that catalyzes the transfer of the ribosyl-5-phosphate group from 5-phospho-alpha-D-ribose 1-diphosphate (PRPP) to the N9 position of the 6-oxopurines guanine and xanthine to form the corresponding ribonucleotides GMP (guanosine 5'-monophosphate) and XMP (xanthosine 5'-monophosphate), with the release of PPi. To a lesser extent, also acts on hypoxanthine. This Escherichia coli (strain UTI89 / UPEC) protein is Xanthine-guanine phosphoribosyltransferase.